The chain runs to 371 residues: Riboflavin biosynthesis protein RibD (371 aa).

A CMP/dCMP-type deaminase domain is found at 1-122; the sequence is MEEYYMNTAI…MLEEAGIEVK (122 aa). Residues 1-144 form a deaminase region; it reads MEEYYMNTAI…KMFLHFMRTG (144 aa). His-49 is a binding site for Zn(2+). The active-site Proton donor is the Glu-51. Zn(2+) is bound by residues Cys-74 and Cys-83. A reductase region spans residues 145-371; sequence LPYVTLKAAA…KDGDDVYRNR (227 aa). Ala-153 lines the NADP(+) pocket. Ser-167 is a binding site for substrate. Trp-169 contacts NADP(+). Residue Arg-183 coordinates substrate. NADP(+)-binding residues include Thr-195 and Asp-199. Residues Leu-203 and Arg-206 each coordinate substrate. Thr-221 serves as a coordination point for NADP(+). Glu-290 contributes to the substrate binding site. 292–298 provides a ligand contact to NADP(+); that stretch reads GASVHGS.

The protein in the N-terminal section; belongs to the cytidine and deoxycytidylate deaminase family. It in the C-terminal section; belongs to the HTP reductase family. The cofactor is Zn(2+).

It catalyses the reaction 2,5-diamino-6-hydroxy-4-(5-phosphoribosylamino)-pyrimidine + H2O + H(+) = 5-amino-6-(5-phospho-D-ribosylamino)uracil + NH4(+). It carries out the reaction 5-amino-6-(5-phospho-D-ribitylamino)uracil + NADP(+) = 5-amino-6-(5-phospho-D-ribosylamino)uracil + NADPH + H(+). Its pathway is cofactor biosynthesis; riboflavin biosynthesis; 5-amino-6-(D-ribitylamino)uracil from GTP: step 2/4. The protein operates within cofactor biosynthesis; riboflavin biosynthesis; 5-amino-6-(D-ribitylamino)uracil from GTP: step 3/4. Converts 2,5-diamino-6-(ribosylamino)-4(3h)-pyrimidinone 5'-phosphate into 5-amino-6-(ribosylamino)-2,4(1h,3h)-pyrimidinedione 5'-phosphate. The protein is Riboflavin biosynthesis protein RibD (ribD) of Bacillus amyloliquefaciens (Bacillus velezensis).